Consider the following 415-residue polypeptide: Zona pellucida-like domain-containing protein 1 (415 aa).

Positions 1–19 are cleaved as a signal peptide; sequence MEQIWLLLLLTIRVLPGSA. The Extracellular segment spans residues 20 to 372; sequence QFNGYNCDAN…PPFQLNAITS (353 aa). The ZP domain occupies 43 to 320; the sequence is YCGVQAITMK…PICSHRERRD (278 aa). Cystine bridges form between Cys-44–Cys-155 and Cys-79–Cys-104. Asn-121 and Asn-164 each carry an N-linked (GlcNAc...) asparagine glycan. 2 disulfides stabilise this stretch: Cys-235–Cys-296 and Cys-255–Cys-313. The disordered stretch occupies residues 323 to 360; that stretch reads RRTTWSPQSSSGSAVLSAGPIITRSDETPTNNSQLGSP. Polar residues-rich tracts occupy residues 325–336 and 350–359; these read TTWSPQSSSGSA and TPTNNSQLGS. Residues 373–393 traverse the membrane as a helical segment; it reads ALISGMVILGVTSFSLLLCSL. Residues 394–415 lie on the Cytoplasmic side of the membrane; sequence ALLHRKGPTSLVLNGIRNPVFD.

In terms of processing, proteolytically cleaved before the transmembrane segment to yield the secreted form found in the extracellular matrix of the cupula. As to expression, detected in placenta, kidney, lung, pancreas and at very low level in other tissues.

It is found in the cytoplasmic vesicle membrane. The protein localises to the secreted. Its subcellular location is the extracellular space. The protein resides in the extracellular matrix. In terms of biological role, glycoprotein which is a component of the gelatinous extracellular matrix in the cupulae of the vestibular organ. This Homo sapiens (Human) protein is Zona pellucida-like domain-containing protein 1 (ZPLD1).